Here is a 199-residue protein sequence, read N- to C-terminus: Large ribosomal subunit protein uL4 (199 aa).

The protein belongs to the universal ribosomal protein uL4 family. In terms of assembly, part of the 50S ribosomal subunit.

Its function is as follows. One of the primary rRNA binding proteins, this protein initially binds near the 5'-end of the 23S rRNA. It is important during the early stages of 50S assembly. It makes multiple contacts with different domains of the 23S rRNA in the assembled 50S subunit and ribosome. Functionally, forms part of the polypeptide exit tunnel. This is Large ribosomal subunit protein uL4 from Aquifex pyrophilus.